The sequence spans 311 residues: Mediator of RNA polymerase II transcription subunit 27 (311 aa).

The residue at position 132 (S132) is a Phosphoserine. K134 is modified (N6-methyllysine).

This sequence belongs to the Mediator complex subunit 27 family. Component of the Mediator complex, which is composed of MED1, MED4, MED6, MED7, MED8, MED9, MED10, MED11, MED12, MED13, MED13L, MED14, MED15, MED16, MED17, MED18, MED19, MED20, MED21, MED22, MED23, MED24, MED25, MED26, MED27, MED29, MED30, MED31, CCNC, CDK8 and CDC2L6/CDK11. The MED12, MED13, CCNC and CDK8 subunits form a distinct module termed the CDK8 module. Mediator containing the CDK8 module is less active than Mediator lacking this module in supporting transcriptional activation. Individual preparations of the Mediator complex lacking one or more distinct subunits have been variously termed ARC, CRSP, DRIP, PC2, SMCC and TRAP.

Its subcellular location is the nucleus. In terms of biological role, component of the Mediator complex, a coactivator involved in the regulated transcription of nearly all RNA polymerase II-dependent genes. Mediator functions as a bridge to convey information from gene-specific regulatory proteins to the basal RNA polymerase II transcription machinery. Mediator is recruited to promoters by direct interactions with regulatory proteins and serves as a scaffold for the assembly of a functional preinitiation complex with RNA polymerase II and the general transcription factors. The polypeptide is Mediator of RNA polymerase II transcription subunit 27 (MED27) (Sus scrofa (Pig)).